The sequence spans 69 residues: uncharacterized protein (69 aa).

This is an uncharacterized protein from Saccharolobus islandicus (Sulfolobus islandicus).